A 235-amino-acid chain; its full sequence is Zein-alpha PMS1 (235 aa).

Positions 1–21 are cleaved as a signal peptide; it reads MAAKIFCLLMLLGLSASAATA.

The protein belongs to the zein family.

Its function is as follows. Zeins are major seed storage proteins. The polypeptide is Zein-alpha PMS1 (ZMPMS1) (Zea mays (Maize)).